We begin with the raw amino-acid sequence, 276 residues long: Large ribosomal subunit protein uL2 (276 aa).

The interval Thr219–Lys276 is disordered.

This sequence belongs to the universal ribosomal protein uL2 family. As to quaternary structure, part of the 50S ribosomal subunit. Forms a bridge to the 30S subunit in the 70S ribosome.

In terms of biological role, one of the primary rRNA binding proteins. Required for association of the 30S and 50S subunits to form the 70S ribosome, for tRNA binding and peptide bond formation. It has been suggested to have peptidyltransferase activity; this is somewhat controversial. Makes several contacts with the 16S rRNA in the 70S ribosome. The protein is Large ribosomal subunit protein uL2 of Alkaliphilus oremlandii (strain OhILAs) (Clostridium oremlandii (strain OhILAs)).